Reading from the N-terminus, the 187-residue chain is UPF0301 protein WIGBR1650 (187 aa).

It belongs to the UPF0301 (AlgH) family.

The protein is UPF0301 protein WIGBR1650 of Wigglesworthia glossinidia brevipalpis.